Consider the following 260-residue polypeptide: LIM and SH3 domain protein 1 (260 aa).

Methionine 1 carries the post-translational modification N-acetylmethionine. The LIM zinc-binding domain maps to cysteine 5–histidine 56. Lysine 42 is subject to N6-acetyllysine. Nebulin repeat units follow at residues serine 61–glycine 95 and glycine 97–methionine 131. Residue threonine 68 is modified to Phosphothreonine. At lysine 75 the chain carries N6-methyllysine. The residue at position 99 (serine 99) is a Phosphoserine. Position 104 is a phosphothreonine (threonine 104). At lysine 112 the chain carries N6-succinyllysine. 2 positions are modified to phosphoserine: serine 118 and serine 134. Residues histidine 123 to lysine 204 are disordered. Residues glutamate 140–glutamine 155 show a composition bias toward basic and acidic residues. The span at glutamine 171 to glutamine 180 shows a compositional bias: low complexity. Residues glycine 201–isoleucine 260 form the SH3 domain.

In terms of assembly, interacts with F-actin. Interacts with ANKRD54. Interacts with KBTBD10. In terms of processing, phosphorylated.

The protein localises to the cytoplasm. It localises to the cell cortex. The protein resides in the cytoskeleton. Plays an important role in the regulation of dynamic actin-based, cytoskeletal activities. Agonist-dependent changes in LASP1 phosphorylation may also serve to regulate actin-associated ion transport activities, not only in the parietal cell but also in certain other F-actin-rich secretory epithelial cell types. The sequence is that of LIM and SH3 domain protein 1 (LASP1) from Bos taurus (Bovine).